The chain runs to 524 residues: 2-isopropylmalate synthase (524 aa).

The region spanning 5 to 267 is the Pyruvate carboxyltransferase domain; sequence VIIFDTTLRD…HTNIRHSEIH (263 aa). Mn(2+) contacts are provided by Asp14, His202, His204, and Asn238. A regulatory domain region spans residues 392-524; that stretch reads KLEYLGVQSG…KTDKINTESV (133 aa).

The protein belongs to the alpha-IPM synthase/homocitrate synthase family. LeuA type 1 subfamily. In terms of assembly, homodimer. Requires Mn(2+) as cofactor.

It localises to the cytoplasm. The catalysed reaction is 3-methyl-2-oxobutanoate + acetyl-CoA + H2O = (2S)-2-isopropylmalate + CoA + H(+). Its pathway is amino-acid biosynthesis; L-leucine biosynthesis; L-leucine from 3-methyl-2-oxobutanoate: step 1/4. In terms of biological role, catalyzes the condensation of the acetyl group of acetyl-CoA with 3-methyl-2-oxobutanoate (2-ketoisovalerate) to form 3-carboxy-3-hydroxy-4-methylpentanoate (2-isopropylmalate). This chain is 2-isopropylmalate synthase, found in Aeromonas hydrophila subsp. hydrophila (strain ATCC 7966 / DSM 30187 / BCRC 13018 / CCUG 14551 / JCM 1027 / KCTC 2358 / NCIMB 9240 / NCTC 8049).